We begin with the raw amino-acid sequence, 152 residues long: Transcriptional regulator MraZ (152 aa).

2 SpoVT-AbrB domains span residues 5 to 52 (ANAI…PLNE) and 81 to 124 (ATES…DEDM).

Belongs to the MraZ family. As to quaternary structure, forms oligomers.

It localises to the cytoplasm. Its subcellular location is the nucleoid. The protein is Transcriptional regulator MraZ of Psychromonas ingrahamii (strain DSM 17664 / CCUG 51855 / 37).